We begin with the raw amino-acid sequence, 169 residues long: Lipoprotein signal peptidase (169 aa).

The Cytoplasmic segment spans residues 1–9 (MPDVDRFGR). The helical transmembrane segment at 10 to 30 (LPWLWITVLVFVLDQVSKAFF) threads the bilayer. Residues 31 to 67 (QAELSMYQQIVVIPDLFSWTLAYNTGAAFSFLADSSG) lie on the Periplasmic side of the membrane. Residues 68–89 (WQRWLFALIAIVVSASLVVWLK) traverse the membrane as a helical segment. Topologically, residues 90-96 (RLKKGET) are cytoplasmic. A helical membrane pass occupies residues 97-118 (WLAIALALVLGGALGNLYDRMV). The Periplasmic segment spans residues 119–140 (LGHVVDFILVHWQNRWYFPAFN). Catalysis depends on residues aspartate 124 and aspartate 143. A helical membrane pass occupies residues 141-154 (LADSAITVGAVMLA). Topologically, residues 155–169 (LDMFRSKKSGEAAHG) are cytoplasmic.

It belongs to the peptidase A8 family. Monomer in the crystal.

The protein localises to the cell inner membrane. The enzyme catalyses Release of signal peptides from bacterial membrane prolipoproteins. Hydrolyzes -Xaa-Yaa-Zaa-|-(S,diacylglyceryl)Cys-, in which Xaa is hydrophobic (preferably Leu), and Yaa (Ala or Ser) and Zaa (Gly or Ala) have small, neutral side chains.. It functions in the pathway protein modification; lipoprotein biosynthesis (signal peptide cleavage). Inhibited by globomycin. In terms of biological role, this protein specifically catalyzes the removal of signal peptides from prolipoproteins. The sequence is that of Lipoprotein signal peptidase from Pseudomonas aeruginosa (strain ATCC 15692 / DSM 22644 / CIP 104116 / JCM 14847 / LMG 12228 / 1C / PRS 101 / PAO1).